A 392-amino-acid polypeptide reads, in one-letter code: Mitochondrial distribution and morphology protein 10 (392 aa).

The protein belongs to the MDM10 family. Component of the ER-mitochondria encounter structure (ERMES) or MDM complex, composed of MMM1, MDM10, MDM12 and MDM34. Associates with the mitochondrial outer membrane sorting assembly machinery SAM(core) complex.

It is found in the mitochondrion outer membrane. In terms of biological role, component of the ERMES/MDM complex, which serves as a molecular tether to connect the endoplasmic reticulum and mitochondria. Components of this complex are involved in the control of mitochondrial shape and protein biogenesis and may function in phospholipid exchange. MDM10 is involved in the late assembly steps of the general translocase of the mitochondrial outer membrane (TOM complex). Functions in the TOM40-specific route of the assembly of outer membrane beta-barrel proteins, including the association of TOM40 with the receptor TOM22 and small TOM proteins. Can associate with the SAM(core) complex as well as the MDM12-MMM1 complex, both involved in late steps of the major beta-barrel assembly pathway, that is responsible for biogenesis of all outer membrane beta-barrel proteins. May act as a switch that shuttles between both complexes and channels precursor proteins into the TOM40-specific pathway. Plays a role in mitochondrial morphology and in the inheritance of mitochondria. The sequence is that of Mitochondrial distribution and morphology protein 10 from Phaeosphaeria nodorum (strain SN15 / ATCC MYA-4574 / FGSC 10173) (Glume blotch fungus).